Here is a 460-residue protein sequence, read N- to C-terminus: Lipase member H-A (460 aa).

The signal sequence occupies residues 1 to 26 (MLLSFYFNGLLLVGCLLSWGRSDTEG). N67 and N75 each carry an N-linked (GlcNAc...) asparagine glycan. S163 acts as the Nucleophile in catalysis. An N-linked (GlcNAc...) asparagine glycan is attached at N177. The active-site Charge relay system is D187. A disulfide bridge connects residues C242 and C255. The Charge relay system role is filled by H257. Intrachain disulfides connect C279–C290 and C293–C301. The N-linked (GlcNAc...) asparagine glycan is linked to N289. A glycan (N-linked (GlcNAc...) asparagine) is linked at N366. A disulfide bridge connects residues C436 and C455.

This sequence belongs to the AB hydrolase superfamily. Lipase family.

The protein localises to the secreted. It localises to the cell membrane. It carries out the reaction 1-hexadecanoyl-2-(9Z-octadecenoyl)-sn-glycero-3-phosphate + H2O = 2-(9Z-octadecenoyl)-sn-glycero-3-phosphate + hexadecanoate + H(+). Hydrolyzes specifically phosphatidic acid (PA) to produce 2-acyl lysophosphatidic acid (LPA; a potent bioactive lipid mediator) and fatty acid. Does not hydrolyze other phospholipids, like phosphatidylserine (PS), phosphatidylcholine (PC) and phosphatidylethanolamine (PE) or triacylglycerol (TG). This Xenopus laevis (African clawed frog) protein is Lipase member H-A (liph-a).